Here is a 141-residue protein sequence, read N- to C-terminus: Lutropin subunit beta (141 aa).

Positions 1-20 (MEMLQGLLLWLLLSVGGVWA) are cleaved as a signal peptide. Disulfide bonds link cysteine 29–cysteine 77, cysteine 43–cysteine 92, cysteine 46–cysteine 130, cysteine 54–cysteine 108, cysteine 58–cysteine 110, and cysteine 113–cysteine 120. N-linked (GlcNAc...) asparagine glycosylation occurs at asparagine 33.

The protein belongs to the glycoprotein hormones subunit beta family. Heterodimer of a common alpha chain and a unique beta chain which confers biological specificity to thyrotropin, lutropin, follitropin and gonadotropin.

The protein localises to the secreted. Functionally, promotes spermatogenesis and ovulation by stimulating the testes and ovaries to synthesize steroids. The chain is Lutropin subunit beta (LHB1) from Ceratotherium simum (White rhinoceros).